The sequence spans 195 residues: Large ribosomal subunit protein uL18 (195 aa).

It belongs to the universal ribosomal protein uL18 family. Part of the 50S ribosomal subunit. Contacts the 5S and 23S rRNAs.

Functionally, this is one of the proteins that bind and probably mediate the attachment of the 5S RNA into the large ribosomal subunit, where it forms part of the central protuberance. This Metallosphaera sedula (strain ATCC 51363 / DSM 5348 / JCM 9185 / NBRC 15509 / TH2) protein is Large ribosomal subunit protein uL18.